A 363-amino-acid chain; its full sequence is tRNA N6-adenosine threonylcarbamoyltransferase (363 aa).

Residues His-121 and His-125 each coordinate Fe cation. Residues 143–147 (LASGG), Asp-176, Gly-189, and Asn-287 each bind substrate. Position 315 (Asp-315) interacts with Fe cation.

It belongs to the KAE1 / TsaD family. It depends on Fe(2+) as a cofactor.

It is found in the cytoplasm. It carries out the reaction L-threonylcarbamoyladenylate + adenosine(37) in tRNA = N(6)-L-threonylcarbamoyladenosine(37) in tRNA + AMP + H(+). Its function is as follows. Required for the formation of a threonylcarbamoyl group on adenosine at position 37 (t(6)A37) in tRNAs that read codons beginning with adenine. Is involved in the transfer of the threonylcarbamoyl moiety of threonylcarbamoyl-AMP (TC-AMP) to the N6 group of A37, together with TsaE and TsaB. TsaD likely plays a direct catalytic role in this reaction. The sequence is that of tRNA N6-adenosine threonylcarbamoyltransferase from Rhodopseudomonas palustris (strain BisA53).